A 173-amino-acid polypeptide reads, in one-letter code: Bifunctional protein PyrR (173 aa).

A PRPP-binding motif is present at residues 93–105; that stretch reads VILVDDVLYTGRT.

Belongs to the purine/pyrimidine phosphoribosyltransferase family. PyrR subfamily. Homodimer and homohexamer; in equilibrium.

It carries out the reaction UMP + diphosphate = 5-phospho-alpha-D-ribose 1-diphosphate + uracil. Regulates transcriptional attenuation of the pyrimidine nucleotide (pyr) operon by binding in a uridine-dependent manner to specific sites on pyr mRNA. This disrupts an antiterminator hairpin in the RNA and favors formation of a downstream transcription terminator, leading to a reduced expression of downstream genes. In terms of biological role, also displays a weak uracil phosphoribosyltransferase activity which is not physiologically significant. The sequence is that of Bifunctional protein PyrR from Streptococcus uberis (strain ATCC BAA-854 / 0140J).